The following is a 237-amino-acid chain: Phosphoribosylaminoimidazole-succinocarboxamide synthase (237 aa).

This sequence belongs to the SAICAR synthetase family.

The enzyme catalyses 5-amino-1-(5-phospho-D-ribosyl)imidazole-4-carboxylate + L-aspartate + ATP = (2S)-2-[5-amino-1-(5-phospho-beta-D-ribosyl)imidazole-4-carboxamido]succinate + ADP + phosphate + 2 H(+). It participates in purine metabolism; IMP biosynthesis via de novo pathway; 5-amino-1-(5-phospho-D-ribosyl)imidazole-4-carboxamide from 5-amino-1-(5-phospho-D-ribosyl)imidazole-4-carboxylate: step 1/2. This chain is Phosphoribosylaminoimidazole-succinocarboxamide synthase, found in Shigella boydii serotype 4 (strain Sb227).